A 440-amino-acid chain; its full sequence is Xaa-Pro dipeptidase (440 aa).

Residues D244, D255, H335, E380, and E419 each coordinate Mn(2+).

The protein belongs to the peptidase M24B family. Bacterial-type prolidase subfamily. The cofactor is Mn(2+).

The catalysed reaction is Xaa-L-Pro dipeptide + H2O = an L-alpha-amino acid + L-proline. Functionally, splits dipeptides with a prolyl residue in the C-terminal position. The chain is Xaa-Pro dipeptidase from Shewanella piezotolerans (strain WP3 / JCM 13877).